The sequence spans 168 residues: MAQNEELTAEAVEAEETLTSYTSESTSAEDAPKKERPALTVAGAAVGRRKEAVARVRVVPGSGKWTINGRTLDNYFPNKLHQQDVNEPFKILDLEGAYDVIARIHGGGISGQAGALRLGVARSLNEIDVDNNRATLKKAGYLSRDARVIERKKAGLKKARKAQQYSKR.

Positions 1 to 29 (MAQNEELTAEAVEAEETLTSYTSESTSAE) are enriched in low complexity. Residues 1 to 36 (MAQNEELTAEAVEAEETLTSYTSESTSAEDAPKKER) are disordered.

Belongs to the universal ribosomal protein uS9 family.

This Paenarthrobacter aurescens (strain TC1) protein is Small ribosomal subunit protein uS9.